The sequence spans 98 residues: Small ribosomal subunit protein uS17 (98 aa).

Belongs to the universal ribosomal protein uS17 family. In terms of assembly, part of the 30S ribosomal subunit.

One of the primary rRNA binding proteins, it binds specifically to the 5'-end of 16S ribosomal RNA. The sequence is that of Small ribosomal subunit protein uS17 from Leptothrix cholodnii (strain ATCC 51168 / LMG 8142 / SP-6) (Leptothrix discophora (strain SP-6)).